The sequence spans 112 residues: Peptidyl-prolyl cis-trans isomerase FKBP12 (112 aa).

A disordered region spans residues 1–26 (MGVEKQVIRPGNGPKPAPGQTVTVHC). The PPIase FKBP-type domain occupies 19–112 (GQTVTVHCTG…DFEIEVLSVQ (94 aa)). A disulfide bridge connects residues Cys-26 and Cys-80.

Belongs to the FKBP-type PPIase family. In terms of assembly, interacts with FIP37 and with the immunosuppressive drug FK506. Its interaction with FIP37 is inhibited by FK506. Interacts with TOR in a rapamycin-dependent manner.

The protein localises to the cytoplasm. The catalysed reaction is [protein]-peptidylproline (omega=180) = [protein]-peptidylproline (omega=0). PPIases accelerate the folding of proteins. It catalyzes the cis-trans isomerization of proline imidic peptide bonds in oligopeptides. Mediates rapamycin inactivation of TOR protein kinase activity. This chain is Peptidyl-prolyl cis-trans isomerase FKBP12 (FKBP12), found in Arabidopsis thaliana (Mouse-ear cress).